The chain runs to 793 residues: PKNSEEQKITEMVYNIFRILLYHAIKYEWGGWRVWVDTLSIAHSKVTYEAHKEYLAKMYEEYQRQEEENIKKGKKGNVSTISGLSSQTTGAKGGMEIREIEDLSQSQSPESETDYPVSTDTRDLLMATKVSDDVLGSAERPGGGVHVEVHDLLVDIKAERVEATEVKLDDMDLSPETLVTGENGALVEVESLLDNVYSAAVEKLQNSVHGSVGIIKKNEEKDGGPLITLADEKDEPSTNSTSFLFDKIPSQEEKLLPDLSISHISIPNVQDTQMHLGVNDDLGLLAHMTGGVDITSTSSIIEDKEFKIHTNSVGMSSIFERELASLFKGLEYAEMTATTPETEFFCSKTVPNVDAGSIISVTERFVDGKEAGKEIRKIQTTTTTQAVQGRSVTQQDRDLRVDLGFRGMPMTEEQRRQFSPGPRTNMFRIPEFKWSPMHQRLLTDLLFALETDVHVWRSHSTKSVMDFVNSNENIIFVHNTIHLISQMVDNIIIACGGILPLLSAATSPTGSKTELENIEVTQGMSAETAVTFLSRLMAMVDVLVFASSLNFSEIEAEKNMSSGGLMRQCLRLVCCVAVRNCLECRQRQRERVNKTSLISSKAQDALQGVTASAATKTPLENVPGNLSPIKDPDRLLQDVDINRLRAVVFRDVDDSKQAQFLALAVVYFISVLMVSKYRDILEPQRETARSGSQAGRNIRQEINSPTSTETPAVFPENIKDKETPTPVEDIQLESSIPHTDSGIGEEQMPNILNGTDLETSTGPDAMSELLSTLSSEVKKSQESLTESPSEILK.

Disordered stretches follow at residues 68-92 (ENIKKGKKGNVSTISGLSSQTTGAK) and 685-793 (RETA…EILK). Composition is skewed to polar residues over residues 77–90 (NVSTISGLSSQTTG), 689–710 (RSGSQAGRNIRQEINSPTSTET), 750–762 (NILNGTDLETSTG), and 782–793 (ESLTESPSEILK).

The protein belongs to the WD repeat neurobeachin family. Interacts with RII subunit of PKA. Forebrain and cerebellum.

It localises to the cytoplasm. The protein localises to the membrane. Its function is as follows. Binds to type II regulatory subunits of protein kinase A and anchors/targets them to the membrane. May anchor the kinase to cytoskeletal and/or organelle-associated proteins. The protein is Neurobeachin (NBEA) of Gallus gallus (Chicken).